The primary structure comprises 348 residues: Flap endonuclease 1 (348 aa).

The N-domain stretch occupies residues 1-98; it reads MGLAELRELI…ETLERRRERK (98 aa). Residues aspartate 28, aspartate 80, glutamate 149, glutamate 151, aspartate 170, aspartate 172, and aspartate 234 each coordinate Mg(2+). The segment at 113 to 256 is I-domain; the sequence is EREKYARQVA…RALQLIRKYG (144 aa). Residues 340–348 form an interaction with PCNA region; it reads RQETLDAFF.

The protein belongs to the XPG/RAD2 endonuclease family. FEN1 subfamily. In terms of assembly, interacts with PCNA. PCNA stimulates the nuclease activity without altering cleavage specificity. The cofactor is Mg(2+).

Its function is as follows. Structure-specific nuclease with 5'-flap endonuclease and 5'-3' exonuclease activities involved in DNA replication and repair. During DNA replication, cleaves the 5'-overhanging flap structure that is generated by displacement synthesis when DNA polymerase encounters the 5'-end of a downstream Okazaki fragment. Binds the unpaired 3'-DNA end and kinks the DNA to facilitate 5' cleavage specificity. Cleaves one nucleotide into the double-stranded DNA from the junction in flap DNA, leaving a nick for ligation. Also involved in the base excision repair (BER) pathway. Acts as a genome stabilization factor that prevents flaps from equilibrating into structures that lead to duplications and deletions. Also possesses 5'-3' exonuclease activity on nicked or gapped double-stranded DNA. In Methanopyrus kandleri (strain AV19 / DSM 6324 / JCM 9639 / NBRC 100938), this protein is Flap endonuclease 1.